Reading from the N-terminus, the 177-residue chain is Large ribosomal subunit protein uL6 (177 aa).

Belongs to the universal ribosomal protein uL6 family. In terms of assembly, part of the 50S ribosomal subunit.

Functionally, this protein binds to the 23S rRNA, and is important in its secondary structure. It is located near the subunit interface in the base of the L7/L12 stalk, and near the tRNA binding site of the peptidyltransferase center. The chain is Large ribosomal subunit protein uL6 from Paracoccus denitrificans (strain Pd 1222).